Consider the following 231-residue polypeptide: Urease accessory protein UreF (231 aa).

This sequence belongs to the UreF family. UreD, UreF and UreG form a complex that acts as a GTP-hydrolysis-dependent molecular chaperone, activating the urease apoprotein by helping to assemble the nickel containing metallocenter of UreC. The UreE protein probably delivers the nickel.

The protein resides in the cytoplasm. Required for maturation of urease via the functional incorporation of the urease nickel metallocenter. In Marinobacter nauticus (strain ATCC 700491 / DSM 11845 / VT8) (Marinobacter aquaeolei), this protein is Urease accessory protein UreF.